The chain runs to 496 residues: GTPase Der (496 aa).

EngA-type G domains lie at P3–L166 and I208–T381. GTP is bound by residues G9–S16, D56–I60, N118–D121, G214–S221, D261–V265, and N326–D329. The 85-residue stretch at T382–D466 folds into the KH-like domain.

This sequence belongs to the TRAFAC class TrmE-Era-EngA-EngB-Septin-like GTPase superfamily. EngA (Der) GTPase family. As to quaternary structure, associates with the 50S ribosomal subunit.

In terms of biological role, GTPase that plays an essential role in the late steps of ribosome biogenesis. This chain is GTPase Der, found in Vibrio vulnificus (strain YJ016).